Reading from the N-terminus, the 45-residue chain is GFEVIDNIKDSVVILGGPNWNVKMGDIRPLTGSNGEIRFDNNYFK.

Belongs to the peroxidase family. Classical plant (class III) peroxidase subfamily. The cofactor is heme b. It depends on Ca(2+) as a cofactor.

It localises to the secreted. The catalysed reaction is 2 a phenolic donor + H2O2 = 2 a phenolic radical donor + 2 H2O. Its function is as follows. Removal of H(2)O(2), oxidation of toxic reductants, biosynthesis and degradation of lignin, suberization, auxin catabolism, response to environmental stresses such as wounding, pathogen attack and oxidative stress. These functions might be dependent on each isozyme/isoform in each plant tissue. This chain is Peroxidase 3, found in Capsicum annuum (Capsicum pepper).